Here is a 342-residue protein sequence, read N- to C-terminus: Putative gluconeogenesis factor (342 aa).

Residues 318–342 (SEPPVAATQEIPIDGGRPRGDDAWR) form a disordered region. Residue T325 is modified to Phosphothreonine. Residues 333-342 (GRPRGDDAWR) show a composition bias toward basic and acidic residues.

This sequence belongs to the gluconeogenesis factor family. Phosphorylated by PknA and/or PknB.

It is found in the cytoplasm. Functionally, required for morphogenesis under gluconeogenic growth conditions. This Mycobacterium tuberculosis (strain CDC 1551 / Oshkosh) protein is Putative gluconeogenesis factor.